The chain runs to 203 residues: Transmembrane protein 269 (203 aa).

Transmembrane regions (helical) follow at residues 60 to 80 (GLAS…LAII), 124 to 144 (FILC…SYYP), and 157 to 177 (LVYI…SAFY).

The protein localises to the membrane. The protein is Transmembrane protein 269 of Homo sapiens (Human).